Reading from the N-terminus, the 97-residue chain is Exodeoxyribonuclease 7 small subunit (97 aa).

The tract at residues 1-22 is disordered; that stretch reads MAKTASPGATPPDNGTEPLPDN.

The protein belongs to the XseB family. Heterooligomer composed of large and small subunits.

It is found in the cytoplasm. It catalyses the reaction Exonucleolytic cleavage in either 5'- to 3'- or 3'- to 5'-direction to yield nucleoside 5'-phosphates.. Functionally, bidirectionally degrades single-stranded DNA into large acid-insoluble oligonucleotides, which are then degraded further into small acid-soluble oligonucleotides. This Burkholderia ambifaria (strain MC40-6) protein is Exodeoxyribonuclease 7 small subunit.